The chain runs to 474 residues: Putative matrix metalloproteinase (474 aa).

A signal peptide spans 1 to 17; that stretch reads MIIYFAVITCSLKLCRS. His-189 contacts Zn(2+). Glu-190 is a catalytic residue. Zn(2+)-binding residues include His-193 and His-199. The Hemopexin repeat unit spans residues 299-344; the sequence is AGVYDAISYVRGDLYVFVGDLHWRFDTSGMLHNGYPQPTGATWRLP.

The protein belongs to the peptidase M10A family. Zn(2+) is required as a cofactor.

This Heliothis virescens ascovirus 3e (HvAV-3e) protein is Putative matrix metalloproteinase.